A 494-amino-acid chain; its full sequence is Glutamate--tRNA ligase (494 aa).

The 'HIGH' region motif lies at 9-19 (PSPTGPLHIGS). The 'KMSKS' region motif lies at 249-253 (KLSKR). K252 provides a ligand contact to ATP.

This sequence belongs to the class-I aminoacyl-tRNA synthetase family. Glutamate--tRNA ligase type 1 subfamily. Monomer.

It localises to the cytoplasm. It carries out the reaction tRNA(Glu) + L-glutamate + ATP = L-glutamyl-tRNA(Glu) + AMP + diphosphate. In terms of biological role, catalyzes the attachment of glutamate to tRNA(Glu) in a two-step reaction: glutamate is first activated by ATP to form Glu-AMP and then transferred to the acceptor end of tRNA(Glu). This chain is Glutamate--tRNA ligase, found in Azobacteroides pseudotrichonymphae genomovar. CFP2.